Here is a 515-residue protein sequence, read N- to C-terminus: Maturase K (515 aa).

The protein belongs to the intron maturase 2 family. MatK subfamily.

It localises to the plastid. Its subcellular location is the chloroplast. Functionally, usually encoded in the trnK tRNA gene intron. Probably assists in splicing its own and other chloroplast group II introns. The chain is Maturase K from Pinus halepensis (Aleppo pine).